A 460-amino-acid polypeptide reads, in one-letter code: MSLINPKVSAMFFDQIVTATDHNIAWEKIQNLLYNLYGEATYNSWLSSLKFVSSSNGEVLLSVPTRFIKEWITVHYMEKILLLWQNEDKSICSIDIQVTEEKNSSSSIISKNKEESVNNLGSPLDPRFTFDNFVVGKPNELAFTAAKRVAESIDPIPGSNPLFLYGGVGLGKTHLMHAIAWHIVNSPSAKRKVVYLSAEKFMYQYITALRSKDIMLFKEQFRSVDVLMVDDVQFISGKDSTQEEFFHTFNALIDQNKQLVISADRSPSDLDGVEERIKSRLGWGLVADINETTFELRLGILQAKVEQMNMYVPQDVLEFLARNIRSNIRELEGALNKVAHTSLIGRSMTVESASETLMDLLRSNHRSITIAEIQKKIAEFFNIKVTDMHSNRRLRSLVRPRQIAMYFAKKFTHKSLPDIGRSFGGRDHATVIHAVKQIENFIKTDSEFADEINQLRKMFK.

The segment at 1 to 91 (MSLINPKVSA…LLWQNEDKSI (91 aa)) is domain I, interacts with DnaA modulators. A domain II region spans residues 91 to 122 (ICSIDIQVTEEKNSSSSIISKNKEESVNNLGS). Residues 123–342 (PLDPRFTFDN…GALNKVAHTS (220 aa)) are domain III, AAA+ region. The ATP site is built by G169, G171, K172, and T173. The interval 343–460 (LIGRSMTVES…EINQLRKMFK (118 aa)) is domain IV, binds dsDNA.

It belongs to the DnaA family. In terms of assembly, oligomerizes as a right-handed, spiral filament on DNA at oriC.

It localises to the cytoplasm. In terms of biological role, plays an essential role in the initiation and regulation of chromosomal replication. ATP-DnaA binds to the origin of replication (oriC) to initiate formation of the DNA replication initiation complex once per cell cycle. Binds the DnaA box (a 9 base pair repeat at the origin) and separates the double-stranded (ds)DNA. Forms a right-handed helical filament on oriC DNA; dsDNA binds to the exterior of the filament while single-stranded (ss)DNA is stabiized in the filament's interior. The ATP-DnaA-oriC complex binds and stabilizes one strand of the AT-rich DNA unwinding element (DUE), permitting loading of DNA polymerase. After initiation quickly degrades to an ADP-DnaA complex that is not apt for DNA replication. Binds acidic phospholipids. The sequence is that of Chromosomal replication initiator protein DnaA from Wolbachia sp. subsp. Brugia malayi (strain TRS).